The sequence spans 323 residues: Elongation factor P--(R)-beta-lysine ligase (323 aa).

Residue 74–76 participates in substrate binding; that stretch reads SPE. ATP contacts are provided by residues 98–100 and asparagine 107; that span reads RNE. Tyrosine 116 lines the substrate pocket. 242-243 is a binding site for ATP; that stretch reads EL. Glutamate 249 is a substrate binding site. Glycine 298 lines the ATP pocket.

The protein belongs to the class-II aminoacyl-tRNA synthetase family. EpmA subfamily. In terms of assembly, homodimer.

It carries out the reaction D-beta-lysine + L-lysyl-[protein] + ATP = N(6)-((3R)-3,6-diaminohexanoyl)-L-lysyl-[protein] + AMP + diphosphate + H(+). Functionally, with EpmB is involved in the beta-lysylation step of the post-translational modification of translation elongation factor P (EF-P). Catalyzes the ATP-dependent activation of (R)-beta-lysine produced by EpmB, forming a lysyl-adenylate, from which the beta-lysyl moiety is then transferred to the epsilon-amino group of a conserved specific lysine residue in EF-P. This chain is Elongation factor P--(R)-beta-lysine ligase, found in Photobacterium profundum (strain SS9).